The following is a 252-amino-acid chain: Fructose-1,6-bisphosphatase/inositol-1-monophosphatase (252 aa).

4 residues coordinate Mg(2+): Glu-65, Asp-81, Ile-83, and Asp-84. Residues 84 to 86 (DGS), Arg-170, Phe-175, and Arg-194 each bind substrate. Asp-201 contacts Mg(2+).

This sequence belongs to the inositol monophosphatase superfamily. FBPase class 4 family. Homodimer. The cofactor is Mg(2+).

It carries out the reaction beta-D-fructose 1,6-bisphosphate + H2O = beta-D-fructose 6-phosphate + phosphate. The enzyme catalyses a myo-inositol phosphate + H2O = myo-inositol + phosphate. IMPase activity is inhibited by Ca(2+) and Zn(2+). In contrast to mammalian I-1-P phosphatases, is not inhibited by Li(+) up to 100 mM. Its function is as follows. Phosphatase with broad specificity; it can dephosphorylate fructose 1,6-bisphosphate, both D and L isomers of inositol-1-phosphate (I-1-P), 2'-AMP, pNPP, beta-glycerol phosphate, and alpha-D-glucose-1-phosphate. Cannot hydrolyze glucose-6-phosphate, fructose-6-phosphate, NAD(+) or 5'-AMP. May be involved in the biosynthesis of a unique osmolyte, di-myo-inositol 1,1-phosphate. The polypeptide is Fructose-1,6-bisphosphatase/inositol-1-monophosphatase (suhB) (Methanocaldococcus jannaschii (strain ATCC 43067 / DSM 2661 / JAL-1 / JCM 10045 / NBRC 100440) (Methanococcus jannaschii)).